We begin with the raw amino-acid sequence, 234 residues long: MPLKDLPPDARPREKLLARGPGALSDVELLAVLLRTGIKGKGVLQMARELLELKKSGSDDNDGFDGIAGLLHATSDDLKRIKGLGPAKRAELVAVLELSRRALAQQLKERTIFATPDAVKHYLQLHLAAKPHEVFAVLFLDVQNRLLALEELFRGTLTQTSVYPREVVLRALHHQASSVVLAHNHPSGTVQPSRADEMLTQTLKTTLALIDVRVLDHVIVAPGEALSMAERGLL.

The MPN domain occupies 112–234; sequence IFATPDAVKH…ALSMAERGLL (123 aa). Residues His-183, His-185, and Asp-196 each coordinate Zn(2+). Positions 183 to 196 match the JAMM motif motif; the sequence is HNHPSGTVQPSRAD.

This sequence belongs to the UPF0758 family.

This is UPF0758 protein Rfer_3252 from Albidiferax ferrireducens (strain ATCC BAA-621 / DSM 15236 / T118) (Rhodoferax ferrireducens).